The chain runs to 640 residues: UvrABC system protein C (640 aa).

Residues 22-101 form the GIY-YIG domain; that stretch reads NDPGCYLMKD…IKSHQPYFNV (80 aa). In terms of domain architecture, UVR spans 211–246; that stretch reads DELRILLEKQMISFSESLKFEEAGSVRDQLKGIDRL.

This sequence belongs to the UvrC family. As to quaternary structure, interacts with UvrB in an incision complex.

It localises to the cytoplasm. In terms of biological role, the UvrABC repair system catalyzes the recognition and processing of DNA lesions. UvrC both incises the 5' and 3' sides of the lesion. The N-terminal half is responsible for the 3' incision and the C-terminal half is responsible for the 5' incision. The sequence is that of UvrABC system protein C from Prochlorococcus marinus (strain NATL1A).